Reading from the N-terminus, the 70-residue chain is Eglin C (70 aa).

It belongs to the protease inhibitor I13 (potato type I serine protease inhibitor) family.

Inhibits both elastase and cathepsin G. This is Eglin C from Hirudo medicinalis (Medicinal leech).